The primary structure comprises 345 residues: tRNA N6-adenosine threonylcarbamoyltransferase (345 aa).

Residues His-117 and His-121 each coordinate Fe cation. Residues 140–144 (LVSGG), Asp-173, Gly-186, and Asn-279 each bind substrate. Asp-307 is a Fe cation binding site.

The protein belongs to the KAE1 / TsaD family. Fe(2+) is required as a cofactor.

It localises to the cytoplasm. It carries out the reaction L-threonylcarbamoyladenylate + adenosine(37) in tRNA = N(6)-L-threonylcarbamoyladenosine(37) in tRNA + AMP + H(+). In terms of biological role, required for the formation of a threonylcarbamoyl group on adenosine at position 37 (t(6)A37) in tRNAs that read codons beginning with adenine. Is involved in the transfer of the threonylcarbamoyl moiety of threonylcarbamoyl-AMP (TC-AMP) to the N6 group of A37, together with TsaE and TsaB. TsaD likely plays a direct catalytic role in this reaction. This chain is tRNA N6-adenosine threonylcarbamoyltransferase, found in Verminephrobacter eiseniae (strain EF01-2).